A 306-amino-acid polypeptide reads, in one-letter code: Small ribosomal subunit protein uS2 (306 aa).

Over residues 229-238 (GEESAAEERP) the composition is skewed to basic and acidic residues. The tract at residues 229–306 (GEESAAEERP…VGEGDESEER (78 aa)) is disordered. Residues 261–287 (QPGEPEAEAFEEAAGEPEDSTEEEAAE) show a composition bias toward acidic residues.

This sequence belongs to the universal ribosomal protein uS2 family.

This is Small ribosomal subunit protein uS2 from Rubrobacter xylanophilus (strain DSM 9941 / JCM 11954 / NBRC 16129 / PRD-1).